The following is a 124-amino-acid chain: Fluoride-specific ion channel FluC 2 (124 aa).

A run of 4 helical transmembrane segments spans residues 1 to 21 (MSDILFVSIGAILGANIRFQI), 34 to 54 (FLILIINTFASFGLGLFLSLV), 66 to 86 (LILFFSIGFFGSLSTFSSFVY), and 103 to 123 (LFIISVSIGIIAFAFGLFLGT). G76 and S79 together coordinate Na(+).

It belongs to the fluoride channel Fluc/FEX (TC 1.A.43) family.

It is found in the cell inner membrane. It carries out the reaction fluoride(in) = fluoride(out). Na(+) is not transported, but it plays an essential structural role and its presence is essential for fluoride channel function. Its function is as follows. Fluoride-specific ion channel. Important for reducing fluoride concentration in the cell, thus reducing its toxicity. This Prochlorococcus marinus (strain NATL2A) protein is Fluoride-specific ion channel FluC 2.